A 364-amino-acid chain; its full sequence is Large ribosomal subunit protein uL22m (364 aa).

This sequence belongs to the universal ribosomal protein uL22 family. As to quaternary structure, component of the mitochondrial large ribosomal subunit (mt-LSU). Mature N.crassa 74S mitochondrial ribosomes consist of a small (37S) and a large (54S) subunit. The 37S small subunit contains a 16S ribosomal RNA (16S mt-rRNA) and 32 different proteins. The 54S large subunit contains a 23S rRNA (23S mt-rRNA) and 42 different proteins. uL22m forms the wall of the exit tunnel.

The protein resides in the mitochondrion. Component of the mitochondrial ribosome (mitoribosome), a dedicated translation machinery responsible for the synthesis of mitochondrial genome-encoded proteins, including at least some of the essential transmembrane subunits of the mitochondrial respiratory chain. The mitoribosomes are attached to the mitochondrial inner membrane and translation products are cotranslationally integrated into the membrane. This is Large ribosomal subunit protein uL22m (mrpl22) from Neurospora crassa (strain ATCC 24698 / 74-OR23-1A / CBS 708.71 / DSM 1257 / FGSC 987).